Consider the following 544-residue polypeptide: Chaperonin GroEL 1 (544 aa).

ATP contacts are provided by residues Thr30 to Pro33, Lys51, Asp87 to Thr91, Gly415, Asp481 to Leu483, and Asp497.

It belongs to the chaperonin (HSP60) family. In terms of assembly, forms a cylinder of 14 subunits composed of two heptameric rings stacked back-to-back. Interacts with the co-chaperonin GroES.

The protein localises to the cytoplasm. It carries out the reaction ATP + H2O + a folded polypeptide = ADP + phosphate + an unfolded polypeptide.. Its function is as follows. Together with its co-chaperonin GroES, plays an essential role in assisting protein folding. The GroEL-GroES system forms a nano-cage that allows encapsulation of the non-native substrate proteins and provides a physical environment optimized to promote and accelerate protein folding. The chain is Chaperonin GroEL 1 from Chlamydia caviae (strain ATCC VR-813 / DSM 19441 / 03DC25 / GPIC) (Chlamydophila caviae).